A 149-amino-acid polypeptide reads, in one-letter code: Prefoldin subunit alpha (149 aa).

Belongs to the prefoldin subunit alpha family. In terms of assembly, heterohexamer of two alpha and four beta subunits.

Its subcellular location is the cytoplasm. Molecular chaperone capable of stabilizing a range of proteins. Seems to fulfill an ATP-independent, HSP70-like function in archaeal de novo protein folding. In Methanospirillum hungatei JF-1 (strain ATCC 27890 / DSM 864 / NBRC 100397 / JF-1), this protein is Prefoldin subunit alpha.